The sequence spans 425 residues: Elongation factor 1-alpha (425 aa).

The tr-type G domain occupies K5–T221. The segment at G14 to S21 is G1. A GTP-binding site is contributed by G14 to S21. A Mg(2+)-binding site is contributed by S21. Positions G70–D74 are G2. Residues D91–G94 form a G3 region. GTP-binding positions include D91–H95 and N146–D149. The interval N146–D149 is G4. The interval S185–F187 is G5.

The protein belongs to the TRAFAC class translation factor GTPase superfamily. Classic translation factor GTPase family. EF-Tu/EF-1A subfamily.

Its subcellular location is the cytoplasm. It catalyses the reaction GTP + H2O = GDP + phosphate + H(+). In terms of biological role, GTP hydrolase that promotes the GTP-dependent binding of aminoacyl-tRNA to the A-site of ribosomes during protein biosynthesis. This chain is Elongation factor 1-alpha, found in Methanocorpusculum labreanum (strain ATCC 43576 / DSM 4855 / Z).